A 2512-amino-acid polypeptide reads, in one-letter code: Fatty acid synthase (2512 aa).

Position 2 is an N-acetylglutamate (Glu2). Residues 2-406 (EDVVIAGIAG…GSNAHVILRP (405 aa)) form the Ketosynthase family 3 (KS3) domain. Residues Cys161, His293, and His331 each act as for beta-ketoacyl synthase activity in the active site. The interval 427–815 (GRTQEAVEIL…GINVLGNNLF (389 aa)) is acyl and malonyl transferases. The active-site For acyl/malonyl transferase activity is Ser580. An acyl-CoA-binding positions include 646–647 (DT), Phe670, and Arg772. Residues 844–967 (PKAEDFPSGS…ISLLENDALK (124 aa)) are N-terminal hotdog fold. The region spanning 844 to 1111 (PKAEDFPSGS…ASVAPRRQQE (268 aa)) is the PKS/mFAS DH domain. Catalysis depends on His878, which acts as the Proton acceptor; for dehydratase activity. A C-terminal hotdog fold region spans residues 984-1111 (AKSGLLMEDV…ASVAPRRQQE (128 aa)). Asp1034 functions as the Proton donor; for dehydratase activity in the catalytic mechanism. The residue at position 1475 (Cys1475) is an S-nitrosocysteine. The interval 1638–1866 (WEVPENWTLE…MIKIQEEEKQ (229 aa)) is enoyl reductase. 1675-1692 (VLIHSGSGGVGQAAIAIA) serves as a coordination point for NADP(+). Lys1708 is modified (N6-(pyridoxal phosphate)lysine). The tract at residues 1867-2119 (YPLRSEPVKL…SFVLAEKVSV (253 aa)) is beta-ketoacyl reductase. Residue 1889 to 1904 (SYIITGGLGGFGLELA) coordinates NADP(+). Cys2093 carries the post-translational modification S-nitrosocysteine. One can recognise a Carrier domain in the interval 2120–2200 (KSEGGSQRDL…ELSSKTGTAE (81 aa)). Position 2158 is an O-(pantetheine 4'-phosphoryl)serine (Ser2158). The segment at 2209-2511 (KTGPGEPPKL…LAEPRVSVRE (303 aa)) is thioesterase. Residues Ser2309 and His2482 each act as for thioesterase activity in the active site.

In terms of assembly, homodimer which is arranged in a head to tail fashion. Post-translationally, S-nitrosylation of Fatty acid synthase at cysteine residues Cys-1475 or Cys-2093 is important for the enzyme dimerization. In adipocytes, S-nitrosylation of Fatty acid synthase occurs under physiological conditions and gradually increases during adipogenesis.

It carries out the reaction acetyl-CoA + n malonyl-CoA + 2n NADPH + 2n H(+) = a long-chain fatty acid + (n+1) CoA + n CO2 + 2n NADP(+).. The catalysed reaction is holo-[ACP] + acetyl-CoA = acetyl-[ACP] + CoA. It catalyses the reaction holo-[ACP] + malonyl-CoA = malonyl-[ACP] + CoA. The enzyme catalyses a fatty acyl-[ACP] + malonyl-[ACP] + H(+) = a 3-oxoacyl-[ACP] + holo-[ACP] + CO2. It carries out the reaction a (3R)-hydroxyacyl-[ACP] + NADP(+) = a 3-oxoacyl-[ACP] + NADPH + H(+). The catalysed reaction is a (3R)-hydroxyacyl-[ACP] = a (2E)-enoyl-[ACP] + H2O. It catalyses the reaction a 2,3-saturated acyl-[ACP] + NADP(+) = a (2E)-enoyl-[ACP] + NADPH + H(+). The enzyme catalyses hexadecanoyl-[ACP] + H2O = hexadecanoate + holo-[ACP] + H(+). It carries out the reaction acetyl-[ACP] + malonyl-[ACP] + H(+) = 3-oxobutanoyl-[ACP] + holo-[ACP] + CO2. The catalysed reaction is 3-oxobutanoyl-[ACP] + NADPH + H(+) = (3R)-hydroxybutanoyl-[ACP] + NADP(+). It catalyses the reaction (3R)-hydroxybutanoyl-[ACP] = (2E)-butenoyl-[ACP] + H2O. The enzyme catalyses (2E)-butenoyl-[ACP] + NADPH + H(+) = butanoyl-[ACP] + NADP(+). It carries out the reaction butanoyl-[ACP] + malonyl-[ACP] + H(+) = 3-oxohexanoyl-[ACP] + holo-[ACP] + CO2. The catalysed reaction is 3-oxohexanoyl-[ACP] + NADPH + H(+) = (3R)-hydroxyhexanoyl-[ACP] + NADP(+). It catalyses the reaction (3R)-hydroxyhexanoyl-[ACP] = (2E)-hexenoyl-[ACP] + H2O. The enzyme catalyses (2E)-hexenoyl-[ACP] + NADPH + H(+) = hexanoyl-[ACP] + NADP(+). It carries out the reaction hexanoyl-[ACP] + malonyl-[ACP] + H(+) = 3-oxooctanoyl-[ACP] + holo-[ACP] + CO2. The catalysed reaction is 3-oxooctanoyl-[ACP] + NADPH + H(+) = (3R)-hydroxyoctanoyl-[ACP] + NADP(+). It catalyses the reaction (3R)-hydroxyoctanoyl-[ACP] = (2E)-octenoyl-[ACP] + H2O. The enzyme catalyses (2E)-octenoyl-[ACP] + NADPH + H(+) = octanoyl-[ACP] + NADP(+). It carries out the reaction octanoyl-[ACP] + malonyl-[ACP] + H(+) = 3-oxodecanoyl-[ACP] + holo-[ACP] + CO2. The catalysed reaction is 3-oxodecanoyl-[ACP] + NADPH + H(+) = (3R)-hydroxydecanoyl-[ACP] + NADP(+). It catalyses the reaction (3R)-hydroxydecanoyl-[ACP] = (2E)-decenoyl-[ACP] + H2O. The enzyme catalyses (2E)-decenoyl-[ACP] + NADPH + H(+) = decanoyl-[ACP] + NADP(+). It carries out the reaction decanoyl-[ACP] + malonyl-[ACP] + H(+) = 3-oxododecanoyl-[ACP] + holo-[ACP] + CO2. The catalysed reaction is 3-oxododecanoyl-[ACP] + NADPH + H(+) = (3R)-hydroxydodecanoyl-[ACP] + NADP(+). It catalyses the reaction (3R)-hydroxydodecanoyl-[ACP] = (2E)-dodecenoyl-[ACP] + H2O. The enzyme catalyses (2E)-dodecenoyl-[ACP] + NADPH + H(+) = dodecanoyl-[ACP] + NADP(+). It carries out the reaction dodecanoyl-[ACP] + malonyl-[ACP] + H(+) = 3-oxotetradecanoyl-[ACP] + holo-[ACP] + CO2. The catalysed reaction is 3-oxotetradecanoyl-[ACP] + NADPH + H(+) = (3R)-hydroxytetradecanoyl-[ACP] + NADP(+). It catalyses the reaction (3R)-hydroxytetradecanoyl-[ACP] = (2E)-tetradecenoyl-[ACP] + H2O. The enzyme catalyses (2E)-tetradecenoyl-[ACP] + NADPH + H(+) = tetradecanoyl-[ACP] + NADP(+). It carries out the reaction tetradecanoyl-[ACP] + malonyl-[ACP] + H(+) = 3-oxohexadecanoyl-[ACP] + holo-[ACP] + CO2. The catalysed reaction is 3-oxohexadecanoyl-[ACP] + NADPH + H(+) = (3R)-hydroxyhexadecanoyl-[ACP] + NADP(+). It catalyses the reaction (3R)-hydroxyhexadecanoyl-[ACP] = (2E)-hexadecenoyl-[ACP] + H2O. The enzyme catalyses (2E)-hexadecenoyl-[ACP] + NADPH + H(+) = hexadecanoyl-[ACP] + NADP(+). It carries out the reaction hexadecanoyl-[ACP] + malonyl-[ACP] + H(+) = 3-oxooctadecanoyl-[ACP] + holo-[ACP] + CO2. The catalysed reaction is 3-oxooctadecanoyl-[ACP] + NADPH + H(+) = (3R)-hydroxyoctadecanoyl-[ACP] + NADP(+). It catalyses the reaction (3R)-hydroxyoctadecanoyl-[ACP] = (2E)-octadecenoyl-[ACP] + H2O. The enzyme catalyses (2E)-octadecenoyl-[ACP] + NADPH + H(+) = octadecanoyl-[ACP] + NADP(+). It carries out the reaction tetradecanoyl-[ACP] + H2O = tetradecanoate + holo-[ACP] + H(+). The catalysed reaction is octadecanoyl-[ACP] + H2O = octadecanoate + holo-[ACP] + H(+). It functions in the pathway lipid metabolism; fatty acid biosynthesis. Cerulenin, a potent non-competitive pharmacological inhibitor of FAS, binds covalently to the active site of the condensing enzyme region, inactivating a key enzyme step in fatty acid synthesis. Fatty acid synthetase is a multifunctional enzyme that catalyzes the de novo biosynthesis of long-chain saturated fatty acids starting from acetyl-CoA and malonyl-CoA in the presence of NADPH. This multifunctional protein contains 7 catalytic activities and a site for the binding of the prosthetic group 4'-phosphopantetheine of the acyl carrier protein ([ACP]) domain. The sequence is that of Fatty acid synthase (FASN) from Gallus gallus (Chicken).